A 324-amino-acid polypeptide reads, in one-letter code: Acetyl-coenzyme A carboxylase carboxyl transferase subunit alpha (324 aa).

One can recognise a CoA carboxyltransferase C-terminal domain in the interval 37–291 (KLDKRLDRLK…QEYVLQEWLK (255 aa)).

It belongs to the AccA family. As to quaternary structure, acetyl-CoA carboxylase is a heterohexamer composed of biotin carboxyl carrier protein (AccB), biotin carboxylase (AccC) and two subunits each of ACCase subunit alpha (AccA) and ACCase subunit beta (AccD).

The protein localises to the cytoplasm. It carries out the reaction N(6)-carboxybiotinyl-L-lysyl-[protein] + acetyl-CoA = N(6)-biotinyl-L-lysyl-[protein] + malonyl-CoA. The protein operates within lipid metabolism; malonyl-CoA biosynthesis; malonyl-CoA from acetyl-CoA: step 1/1. In terms of biological role, component of the acetyl coenzyme A carboxylase (ACC) complex. First, biotin carboxylase catalyzes the carboxylation of biotin on its carrier protein (BCCP) and then the CO(2) group is transferred by the carboxyltransferase to acetyl-CoA to form malonyl-CoA. The chain is Acetyl-coenzyme A carboxylase carboxyl transferase subunit alpha from Chlamydia trachomatis serovar D (strain ATCC VR-885 / DSM 19411 / UW-3/Cx).